We begin with the raw amino-acid sequence, 147 residues long: Excisionase (147 aa).

Its function is as follows. Excisionase and integrase are necessary for the excision of prophage from the host genome by site-specific recombination. The protein is Excisionase (xis) of Shigella phage SfV (Shigella flexneri bacteriophage V).